The chain runs to 260 residues: Type III pantothenate kinase (260 aa).

ATP is bound at residue 6–13; it reads DAGNTRIK. Substrate-binding positions include Tyr100 and 107–110; that span reads GADR. Asp109 acts as the Proton acceptor in catalysis. Thr133 is an ATP binding site. Residue Thr186 coordinates substrate.

It belongs to the type III pantothenate kinase family. Homodimer. NH4(+) serves as cofactor. The cofactor is K(+).

The protein resides in the cytoplasm. The catalysed reaction is (R)-pantothenate + ATP = (R)-4'-phosphopantothenate + ADP + H(+). It functions in the pathway cofactor biosynthesis; coenzyme A biosynthesis; CoA from (R)-pantothenate: step 1/5. Functionally, catalyzes the phosphorylation of pantothenate (Pan), the first step in CoA biosynthesis. This Janthinobacterium sp. (strain Marseille) (Minibacterium massiliensis) protein is Type III pantothenate kinase.